The following is a 746-amino-acid chain: Transcription factor pbcR (746 aa).

The segment covering 1–12 (MYPWSSTGTSPF) has biased composition (polar residues). The interval 1 to 40 (MYPWSSTGTSPFSHPDNEGAESGDMSMGEEQQQPHQRRQK) is disordered. Positions 47 to 76 (CQSCRASKVRCDQPNPGMPCLRCQKSGKPC) form a DNA-binding region, zn(2)-C6 fungal-type. A disordered region spans residues 109-131 (ELQDSAGDGETAHSTALRSPSQL). Residues 120–131 (AHSTALRSPSQL) are compositionally biased toward polar residues.

It localises to the nucleus. Its function is as follows. Transcription factor; part of the gene cluster that mediates the biosynthesis of the diterpene ent-pimara-8(14),15-diene (PD). Acts as a positive regulator for the cluster gene. Down-regulates the expression of the penicillin gene cluster, two putative polyketide clusters, and one putative nonribosomal peptide cluster. This Emericella nidulans (strain FGSC A4 / ATCC 38163 / CBS 112.46 / NRRL 194 / M139) (Aspergillus nidulans) protein is Transcription factor pbcR.